We begin with the raw amino-acid sequence, 231 residues long: Probable amino-acid ABC transporter permease protein y4tG (231 aa).

Transmembrane regions (helical) follow at residues 9–29, 32–52, 64–84, 86–106, 161–181, and 196–216; these read TGNG…MGLI, LQAA…FAVL, AAVL…FFLY, VLPE…ALGI, YLVS…VEML, and VPLS…SALV. Positions 28–217 constitute an ABC transmembrane type-1 domain; sequence LITTLQAAFL…LTIVASALVR (190 aa).

The protein belongs to the binding-protein-dependent transport system permease family. HisMQ subfamily.

It localises to the cell inner membrane. Probably part of the binding-protein-dependent transport system y4tEFGH for an amino acid. Probably responsible for the translocation of the substrate across the membrane. The protein is Probable amino-acid ABC transporter permease protein y4tG of Sinorhizobium fredii (strain NBRC 101917 / NGR234).